Consider the following 273-residue polypeptide: Diadenylate cyclase (273 aa).

A run of 3 helical transmembrane segments spans residues 12–32, 37–57, and 61–81; these read LANIVDILVVWFVIYKVIMLI, AVQLLKGIFIIIAVKLLSGFF, and TVEWITDQMLTWGFLAIIIIF. One can recognise a DAC domain in the interval 82-242; sequence QPELRRALET…GGELFRDVSE (161 aa).

The protein belongs to the adenylate cyclase family. DacA/CdaA subfamily. In terms of assembly, probably a homodimer.

The protein localises to the cell membrane. The catalysed reaction is 2 ATP = 3',3'-c-di-AMP + 2 diphosphate. In terms of biological role, catalyzes the condensation of 2 ATP molecules into cyclic di-AMP (c-di-AMP), a signaling compound secreted into the host's cytosol where it triggers the cytosolic surveillance pathway (CSP), a host pathway of innate immunity characterized by expression of beta interferon (IFN-beta) and coregulated genes. Overexpression increases export of c-di-AMP. c-di-AMP is a second messenger that mediates growth, cell wall stability and virulence. The sequence is that of Diadenylate cyclase from Listeria monocytogenes serotype 1/2a (strain 10403S).